The sequence spans 62 residues: Disintegrin schistatin-like subunit A (62 aa).

Residues 1–62 (SVNPCCDPVI…TTDCPRNRYN (62 aa)) form the Disintegrin domain. Intrachain disulfides connect C5/C28, C19/C25, C24/C49, and C37/C56. A Cell attachment site motif is present at residues 41-43 (RGD).

It belongs to the disintegrin family. Dimeric disintegrin subfamily. Heterodimer with subunit B; disulfide-linked. In terms of tissue distribution, expressed by the venom gland.

The protein resides in the secreted. Functionally, may bind to both alpha-IIb/beta-3 (ITGA2B/ITGB3) and alpha-V/beta-3 (ITGAV/ITGB3) integrins, and may inhibit platelet aggregation. This is Disintegrin schistatin-like subunit A from Echis carinatus (Saw-scaled viper).